Reading from the N-terminus, the 528-residue chain is Glucose transporter 1E (528 aa).

Residues 1–22 (MTERRDNVSHAPDAIEGPNDGA) are disordered. The Cytoplasmic portion of the chain corresponds to 1-43 (MTERRDNVSHAPDAIEGPNDGAHAEETSPGFFSFENLGVAQVQ). The helical transmembrane segment at 44-64 (VVGGTLNGYVIGYVAVYLLLY) threads the bilayer. The Extracellular portion of the chain corresponds to 65 to 118 (LTATECKFTTEGACGGRKIYGCKWSGTTCKFENPKCSEGSDPSDSCKNEVAYTS). Residues 119-139 (VYSGIFACAMIVGSMVGSIIA) form a helical membrane-spanning segment. Residues 140–151 (GKCITTFGLKKS) lie on the Cytoplasmic side of the membrane. The chain crosses the membrane as a helical span at residues 152-172 (FIIVSITCTIACVVVQVAIEY). Residues 173–175 (NNY) are Extracellular-facing. The helical transmembrane segment at 176–196 (YALCTGRVLIGLGVGILCSVF) threads the bilayer. The Cytoplasmic segment spans residues 197 to 213 (PMYVNENAHPKLCKMDG). A helical membrane pass occupies residues 214-234 (VLFQVFTTLGIMLAAMLGLIL). Residues 235-250 (DKTGASKEEANMAGRL) lie on the Extracellular side of the membrane. The helical transmembrane segment at 251 to 271 (HVFSAVPLGLSVAMFLVGMFL) threads the bilayer. Residues 272–301 (RESTATFAQDDDGKADGGMDPNEYGWGQML) lie on the Cytoplasmic side of the membrane. A helical transmembrane segment spans residues 302–322 (WPLFMGAVTAGTLQLTGINAV). At 323–338 (MNYAPKITENLGMDPS) the chain is on the extracellular side. Residues 339–359 (LGNFLVMAWNFVTSLVAIPLA) form a helical membrane-spanning segment. The Cytoplasmic portion of the chain corresponds to 360 to 367 (SRFTMRQM). A helical transmembrane segment spans residues 368–388 (FITCSFVASCMCLFLCGIPVF). Topologically, residues 389-403 (PGVAEEKVKNGVATT) are extracellular. Residues 404–424 (GIALFIAAFEFGVGSCFFVLA) traverse the membrane as a helical segment. Topologically, residues 425-438 (QDLFPPSFRPKGSS) are cytoplasmic. Residues 439–459 (FVVMMQFIFNILINLLYPITT) form a helical membrane-spanning segment. Over 460 to 475 (EAISGGATGDQDKGQA) the chain is Extracellular. The helical transmembrane segment at 476 to 496 (VVFILFGLIGLICFVLQFFYL) threads the bilayer. Over 497-528 (YPYDANQDHENDHGTEPVERILSPVDVPTPRN) the chain is Cytoplasmic. The tract at residues 507 to 528 (NDHGTEPVERILSPVDVPTPRN) is disordered.

Belongs to the major facilitator superfamily. Sugar transporter (TC 2.A.1.1) family.

Its subcellular location is the membrane. Its function is as follows. Facilitative glucose transporter. This Trypanosoma brucei brucei protein is Glucose transporter 1E (THT1E).